The primary structure comprises 436 residues: GTPase Der (436 aa).

2 EngA-type G domains span residues 4 to 167 (PVVA…KNIP) and 176 to 351 (VQFC…ENHS). GTP is bound by residues 10 to 17 (GRPNVGKS), 57 to 61 (DTGGI), 119 to 122 (NKLD), 182 to 189 (GRPNVGKS), 229 to 233 (DTAGM), and 294 to 297 (NKWD). In terms of domain architecture, KH-like spans 352–436 (LRVQTNVLND…PIKIFARARK (85 aa)).

Belongs to the TRAFAC class TrmE-Era-EngA-EngB-Septin-like GTPase superfamily. EngA (Der) GTPase family. In terms of assembly, associates with the 50S ribosomal subunit.

Its function is as follows. GTPase that plays an essential role in the late steps of ribosome biogenesis. This Bacillus velezensis (strain DSM 23117 / BGSC 10A6 / LMG 26770 / FZB42) (Bacillus amyloliquefaciens subsp. plantarum) protein is GTPase Der.